The chain runs to 427 residues: Glutamate-1-semialdehyde 2,1-aminomutase 2 (427 aa).

K267 is subject to N6-(pyridoxal phosphate)lysine.

Belongs to the class-III pyridoxal-phosphate-dependent aminotransferase family. HemL subfamily. In terms of assembly, homodimer. Requires pyridoxal 5'-phosphate as cofactor.

The protein localises to the cytoplasm. The enzyme catalyses (S)-4-amino-5-oxopentanoate = 5-aminolevulinate. It participates in porphyrin-containing compound metabolism; protoporphyrin-IX biosynthesis; 5-aminolevulinate from L-glutamyl-tRNA(Glu): step 2/2. This Staphylococcus saprophyticus subsp. saprophyticus (strain ATCC 15305 / DSM 20229 / NCIMB 8711 / NCTC 7292 / S-41) protein is Glutamate-1-semialdehyde 2,1-aminomutase 2.